A 67-amino-acid chain; its full sequence is Beta-defensin 103A (67 aa).

The first 22 residues, 1 to 22 (MRIHYLLFALLFLFLVPVPGHG), serve as a signal peptide directing secretion. Disulfide bonds link cysteine 33–cysteine 62, cysteine 40–cysteine 55, and cysteine 45–cysteine 63.

The protein belongs to the beta-defensin family.

The protein resides in the secreted. In terms of biological role, exhibits antimicrobial activity against Gram-positive and Gram-negative bacteria. The sequence is that of Beta-defensin 103A (DEFB103A) from Pan troglodytes (Chimpanzee).